The following is a 98-amino-acid chain: Large ribosomal subunit protein eL30 (98 aa).

The protein belongs to the eukaryotic ribosomal protein eL30 family.

This Methanothermobacter thermautotrophicus (strain ATCC 29096 / DSM 1053 / JCM 10044 / NBRC 100330 / Delta H) (Methanobacterium thermoautotrophicum) protein is Large ribosomal subunit protein eL30 (rpl30e).